A 364-amino-acid polypeptide reads, in one-letter code: Succinyl-diaminopimelate desuccinylase (364 aa).

H64 lines the Zn(2+) pocket. Residue D66 is part of the active site. D95 provides a ligand contact to Zn(2+). The Proton acceptor role is filled by E125. Residues E126, E154, and H339 each contribute to the Zn(2+) site.

The protein belongs to the peptidase M20A family. DapE subfamily. As to quaternary structure, homodimer. Requires Zn(2+) as cofactor. Co(2+) serves as cofactor.

It carries out the reaction N-succinyl-(2S,6S)-2,6-diaminopimelate + H2O = (2S,6S)-2,6-diaminopimelate + succinate. Its pathway is amino-acid biosynthesis; L-lysine biosynthesis via DAP pathway; LL-2,6-diaminopimelate from (S)-tetrahydrodipicolinate (succinylase route): step 3/3. In terms of biological role, catalyzes the hydrolysis of N-succinyl-L,L-diaminopimelic acid (SDAP), forming succinate and LL-2,6-diaminopimelate (DAP), an intermediate involved in the bacterial biosynthesis of lysine and meso-diaminopimelic acid, an essential component of bacterial cell walls. This is Succinyl-diaminopimelate desuccinylase from Nitratiruptor sp. (strain SB155-2).